The chain runs to 438 residues: Putative phospholipase A2 (438 aa).

The active-site Nucleophile is Ser257. Catalysis depends on charge relay system residues Asp291 and His368.

It belongs to the serine esterase family.

Its subcellular location is the cytoplasm. The protein localises to the nucleus. It catalyses the reaction a 1-O-alkyl-2-acetyl-sn-glycero-3-phosphocholine + H2O = a 1-O-alkyl-sn-glycero-3-phosphocholine + acetate + H(+). This Schizosaccharomyces pombe (strain 972 / ATCC 24843) (Fission yeast) protein is Putative phospholipase A2.